A 318-amino-acid polypeptide reads, in one-letter code: Taste receptor type 2 member 60 (318 aa).

The Extracellular segment spans residues 1–7; the sequence is MNGDHMV. The chain crosses the membrane as a helical span at residues 8–28; the sequence is LGSSVTDKKAIILVTILLLLR. The Cytoplasmic portion of the chain corresponds to 29–40; that stretch reads LVAIAGNGFITA. The helical transmembrane segment at 41–61 threads the bilayer; the sequence is ALGVEWVLRRMLLPCDKLLVS. The Extracellular segment spans residues 62 to 88; it reads LGASRFCLQSVVMGKTIYVFLHPMAFP. A helical membrane pass occupies residues 89–109; sequence YNPVLQFLAFQWDFLNAATLW. The Cytoplasmic segment spans residues 110-128; that stretch reads SSTWLSVFYCVKIATFTHP. A helical membrane pass occupies residues 129–149; it reads VFFWLKHKLSGWLPWMLFSSV. Topologically, residues 150 to 183 are extracellular; that stretch reads GLSSFTTILFFIGNHRMYQNYLRNHLQPWNVTGD. Asn-179 carries an N-linked (GlcNAc...) asparagine glycan. Residues 184–204 form a helical membrane-spanning segment; the sequence is SIRSYCEKFYLFPLKMITWTM. The Cytoplasmic segment spans residues 205–234; it reads PTAVFFICMILLITSLGRHRKKALLTTSGF. The chain crosses the membrane as a helical span at residues 235 to 255; it reads REPSVQAHIKALLALLSFAML. Over 256 to 264 the chain is Extracellular; sequence FISYFLSLV. The helical transmembrane segment at 265-285 threads the bilayer; it reads FSAAGIFPPLDFKFWVWESVI. Residues 286–318 are Cytoplasmic-facing; the sequence is YLCAAVHPIILLFSNCRLRAVLKSRRSSRCGTP.

Belongs to the G-protein coupled receptor T2R family. Expressed in subsets of taste receptor cells of the tongue and exclusively in gustducin-positive cells.

The protein localises to the membrane. Receptor that may play a role in the perception of bitterness and is gustducin-linked. May play a role in sensing the chemical composition of the gastrointestinal content. The activity of this receptor may stimulate alpha gustducin, mediate PLC-beta-2 activation and lead to the gating of TRPM5. This chain is Taste receptor type 2 member 60 (TAS2R60), found in Homo sapiens (Human).